A 336-amino-acid polypeptide reads, in one-letter code: Acetyl-coenzyme A carboxylase carboxyl transferase subunit alpha (336 aa).

Residues 48 to 308 (ALEAKVESLR…KSMLIEELQG (261 aa)) form the CoA carboxyltransferase C-terminal domain.

The protein belongs to the AccA family. In terms of assembly, acetyl-CoA carboxylase is a heterohexamer composed of biotin carboxyl carrier protein (AccB), biotin carboxylase (AccC) and two subunits each of ACCase subunit alpha (AccA) and ACCase subunit beta (AccD).

It is found in the cytoplasm. The catalysed reaction is N(6)-carboxybiotinyl-L-lysyl-[protein] + acetyl-CoA = N(6)-biotinyl-L-lysyl-[protein] + malonyl-CoA. The protein operates within lipid metabolism; malonyl-CoA biosynthesis; malonyl-CoA from acetyl-CoA: step 1/1. Component of the acetyl coenzyme A carboxylase (ACC) complex. First, biotin carboxylase catalyzes the carboxylation of biotin on its carrier protein (BCCP) and then the CO(2) group is transferred by the carboxyltransferase to acetyl-CoA to form malonyl-CoA. The protein is Acetyl-coenzyme A carboxylase carboxyl transferase subunit alpha of Chlorobaculum parvum (strain DSM 263 / NCIMB 8327) (Chlorobium vibrioforme subsp. thiosulfatophilum).